The chain runs to 141 residues: Small ribosomal subunit protein bS16 (141 aa).

Polar residues-rich tracts occupy residues 89–101 (NVSVSHAESTEAI) and 109–129 (ATANTESNEVSDSESTATATI). Positions 89-141 (NVSVSHAESTEAITNAEPIQATANTESNEVSDSESTATATIRESEEQPPISES) are disordered.

Belongs to the bacterial ribosomal protein bS16 family.

The chain is Small ribosomal subunit protein bS16 from Trichodesmium erythraeum (strain IMS101).